The chain runs to 695 residues: Rho-related BTB domain-containing protein 1 (695 aa).

Residues 1–210 (MDSDMDYERP…DNAIRAALIS (210 aa)) form a rho-like region. GTP is bound by residues 21–28 (GDNAVGKT), 84–88 (DTFGD), and 140–143 (CQLD). BTB domains lie at 266 to 426 (ADVL…DEKE) and 484 to 551 (SDVT…SPNL). The interval 325-351 (SLGSAEEGKEGPQRTPQADPGASSGQD) is disordered.

The protein belongs to the small GTPase superfamily. Rho family. As to expression, highest expression in heart and testis.

This chain is Rho-related BTB domain-containing protein 1 (Rhobtb1), found in Mus musculus (Mouse).